A 420-amino-acid polypeptide reads, in one-letter code: Ribulose bisphosphate carboxylase large chain (420 aa).

Substrate is bound by residues Asn103 and Thr153. The active-site Proton acceptor is the Lys155. Lys157 contributes to the substrate binding site. Residues Lys181, Asp183, and Glu184 each coordinate Mg(2+). Position 181 is an N6-carboxylysine (Lys181). The active-site Proton acceptor is the His274. The substrate site is built by Arg275, His307, and Ser359.

Belongs to the RuBisCO large chain family. Type I subfamily. As to quaternary structure, heterohexadecamer of 8 large chains and 8 small chains; disulfide-linked. The disulfide link is formed within the large subunit homodimers. Mg(2+) is required as a cofactor. The disulfide bond which can form in the large chain dimeric partners within the hexadecamer appears to be associated with oxidative stress and protein turnover.

It localises to the plastid. The protein resides in the chloroplast. It carries out the reaction 2 (2R)-3-phosphoglycerate + 2 H(+) = D-ribulose 1,5-bisphosphate + CO2 + H2O. It catalyses the reaction D-ribulose 1,5-bisphosphate + O2 = 2-phosphoglycolate + (2R)-3-phosphoglycerate + 2 H(+). Functionally, ruBisCO catalyzes two reactions: the carboxylation of D-ribulose 1,5-bisphosphate, the primary event in carbon dioxide fixation, as well as the oxidative fragmentation of the pentose substrate in the photorespiration process. Both reactions occur simultaneously and in competition at the same active site. The polypeptide is Ribulose bisphosphate carboxylase large chain (Anemia mexicana (Mexican fern)).